The following is a 289-amino-acid chain: MALSFKNSSGVLKAKTLKDGFVTSSDIETTVHDFSYEKPDLSSVDGFSLKSLLSSDGWHIVVAYQSVTNSERLNNNKKNNKTQRFKLFTFDIIVIPGLKPNKSKNVVSYNRFMALCIGMICYHKKWKVFNWSNKRYEDNKNTINFNEDDDFMNKLAMSAGFSKEHKYHWFYSTGFEYTFDIFPAEVIAMSLFRWSHRVELKIKYEHESDLVAPMVRQVTKRGNISDVMDIVGKDIIAKKYEEIVKDRSSIGIGTKYNDILDEFKDIFNKIDSSSLDSTIKNCFNKIDGE.

The residue at position 2 (A2) is an N-acetylalanine; by host.

It belongs to the high plain virus capsid family.

The protein resides in the virion. The chain is Capsid protein from Hordeum vulgare (Barley).